Here is a 649-residue protein sequence, read N- to C-terminus: Echinoderm microtubule-associated protein-like 2 (649 aa).

The segment at 10 to 649 (KEVIFSVEDG…DTSVLQWRVV (640 aa)) is tandem atypical propeller in EMLs. 2 coiled-coil regions span residues 13–58 (IFSV…LKLE) and 73–114 (YLLP…LAIH). WD repeat units lie at residues 56 to 93 (KLEW…LYSV), 97 to 144 (RQRH…IWDS), 151 to 192 (HVLG…VWDW), 195 to 234 (ETKV…FWTL), 241 to 280 (KRQG…VWGK), 285 to 323 (ITQA…LWGS), 369 to 406 (FSLL…LWSS), 410 to 447 (QPLW…LLDT), 452 to 489 (LVAI…VYTV), 495 to 535 (KVSR…YWDP), 564 to 602 (FGIW…LFSY), and 609 to 648 (ALSH…QWRV).

It belongs to the WD repeat EMAP family. As to quaternary structure, homotrimer; self-association is mediated by the N-terminal coiled coil. Interacts with GRID2 and may also interact with GRID1. Interacts with EML3. Binds unpolymerized tubulins via its WD repeat region. Ubiquitous.

It localises to the cytoplasm. It is found in the cytoskeleton. The protein localises to the spindle. Its function is as follows. Tubulin binding protein that inhibits microtubule nucleation and growth, resulting in shorter microtubules. This chain is Echinoderm microtubule-associated protein-like 2 (EML2), found in Homo sapiens (Human).